We begin with the raw amino-acid sequence, 134 residues long: Ribonuclease VapC1 (134 aa).

The PINc domain occupies 3-132 (YMLDTNIIIY…RITDLQWQDW (130 aa)). Mg(2+) contacts are provided by Asp-6 and Asp-99.

The protein belongs to the PINc/VapC protein family. The cofactor is Mg(2+).

In terms of biological role, toxic component of a type II toxin-antitoxin (TA) system. Acts as an RNase, its toxic effect is neutralized by VapB1 antitoxin. This is Ribonuclease VapC1 from Haemophilus influenzae (strain ATCC 51907 / DSM 11121 / KW20 / Rd).